The sequence spans 115 residues: Parathyroid hormone (115 aa).

An N-terminal signal peptide occupies residues 1 to 25 (MIPAKDMAKVMIVMLAICFLTKSDG). A propeptide spanning residues 26-31 (KSVKKR) is cleaved from the precursor. The interval 51–69 (RVEWLRKKLQDVHNFIALG) is important for receptor binding. Residues 72–96 (LAPRDAGSQRPRKKEDNILVESHEK) form a disordered region. The segment covering 84–96 (KKEDNILVESHEK) has biased composition (basic and acidic residues).

This sequence belongs to the parathyroid hormone family. As to quaternary structure, interacts with PTH1R (via N-terminal extracellular domain).

It localises to the secreted. Functionally, parathyroid hormone elevates calcium level by dissolving the salts in bone and preventing their renal excretion. Acts by binding to its receptor, PTH1R, activating G protein-coupled receptor signaling. Stimulates [1-14C]-2-deoxy-D-glucose (2DG) transport and glycogen synthesis in osteoblastic cells. This chain is Parathyroid hormone (PTH), found in Macaca fascicularis (Crab-eating macaque).